Consider the following 333-residue polypeptide: tRNA pseudouridine synthase B (333 aa).

Aspartate 46 (nucleophile) is an active-site residue.

This sequence belongs to the pseudouridine synthase TruB family. Type 1 subfamily.

It catalyses the reaction uridine(55) in tRNA = pseudouridine(55) in tRNA. Its function is as follows. Responsible for synthesis of pseudouridine from uracil-55 in the psi GC loop of transfer RNAs. This is tRNA pseudouridine synthase B from Gluconobacter oxydans (strain 621H) (Gluconobacter suboxydans).